A 491-amino-acid polypeptide reads, in one-letter code: Cobyric acid synthase (491 aa).

One can recognise a GATase cobBQ-type domain in the interval 250–439 (EVTIAVIRLP…LHGIFDNGAW (190 aa)). C331 functions as the Nucleophile in the catalytic mechanism. The active site involves H431.

This sequence belongs to the CobB/CobQ family. CobQ subfamily.

Its pathway is cofactor biosynthesis; adenosylcobalamin biosynthesis. Catalyzes amidations at positions B, D, E, and G on adenosylcobyrinic A,C-diamide. NH(2) groups are provided by glutamine, and one molecule of ATP is hydrogenolyzed for each amidation. This is Cobyric acid synthase from Synechococcus sp. (strain ATCC 27144 / PCC 6301 / SAUG 1402/1) (Anacystis nidulans).